The chain runs to 156 residues: MKQNVFEVLMYLFENYLYNDEEPGDRDSLESELHEAGFSAMEIRKAFEWLDALADSRVLPAAPSGKSSIRLFGEPELARLDTETRGFILYLEQVGILTAESRELVLDRILALDDHEVDLDTVKWVILMVLFNRPGEEEAYNWMENLMFDVPTHLVH.

Belongs to the Smg family.

The sequence is that of Protein Smg homolog from Halorhodospira halophila (strain DSM 244 / SL1) (Ectothiorhodospira halophila (strain DSM 244 / SL1)).